A 99-amino-acid chain; its full sequence is Co-chaperonin GroES (99 aa).

It belongs to the GroES chaperonin family. As to quaternary structure, heptamer of 7 subunits arranged in a ring. Interacts with the chaperonin GroEL.

The protein localises to the cytoplasm. In terms of biological role, together with the chaperonin GroEL, plays an essential role in assisting protein folding. The GroEL-GroES system forms a nano-cage that allows encapsulation of the non-native substrate proteins and provides a physical environment optimized to promote and accelerate protein folding. GroES binds to the apical surface of the GroEL ring, thereby capping the opening of the GroEL channel. In Rhodococcus erythropolis (strain PR4 / NBRC 100887), this protein is Co-chaperonin GroES.